The sequence spans 95 residues: Co-chaperonin GroES (95 aa).

This sequence belongs to the GroES chaperonin family. In terms of assembly, heptamer of 7 subunits arranged in a ring. Interacts with the chaperonin GroEL.

It localises to the cytoplasm. Its function is as follows. Together with the chaperonin GroEL, plays an essential role in assisting protein folding. The GroEL-GroES system forms a nano-cage that allows encapsulation of the non-native substrate proteins and provides a physical environment optimized to promote and accelerate protein folding. GroES binds to the apical surface of the GroEL ring, thereby capping the opening of the GroEL channel. This Geobacter metallireducens (strain ATCC 53774 / DSM 7210 / GS-15) protein is Co-chaperonin GroES.